Reading from the N-terminus, the 324-residue chain is PTS system glucose-specific EIICBA component (324 aa).

The 63-residue stretch at 1–63 folds into the PTS EIIC type-1 domain; that stretch reads HLLNVKIGMT…KWDLATPGRE (63 aa). The next 2 helical transmembrane spans lie at 5-25 and 28-48; these read VKIG…GVLP and TAWW…YFGF. Positions 78 to 159 constitute a PTS EIIB type-1 domain; sequence GDLPYEVLAA…QDIMQGKAPA (82 aa). The Phosphocysteine intermediate; for EIIB activity role is filled by cysteine 100. The disordered stretch occupies residues 156-177; sequence KAPARAEEKPKTAASEAAESET. Low complexity predominate over residues 167-177; it reads TAASEAAESET. Positions 194 to 298 constitute a PTS EIIA type-1 domain; it reads DQVFSQKMMG…SIVTPVIFTN (105 aa). The active-site Tele-phosphohistidine intermediate; for EIIA activity is histidine 246.

It is found in the cell membrane. It catalyses the reaction N(pros)-phospho-L-histidyl-[protein] + D-glucose(out) = D-glucose 6-phosphate(in) + L-histidyl-[protein]. Its function is as follows. The phosphoenolpyruvate-dependent sugar phosphotransferase system (sugar PTS), a major carbohydrate active transport system, catalyzes the phosphorylation of incoming sugar substrates concomitantly with their translocation across the cell membrane. This system is involved in glucose transport. The polypeptide is PTS system glucose-specific EIICBA component (ptsG) (Geobacillus stearothermophilus (Bacillus stearothermophilus)).